The sequence spans 140 residues: uncharacterized protein (140 aa).

It is found in the mitochondrion. This is an uncharacterized protein from Homo sapiens (Human).